Consider the following 427-residue polypeptide: O-methyltransferase sol2 (427 aa).

Position 281 (Asp281) interacts with S-adenosyl-L-methionine. The Proton acceptor role is filled by His327.

The protein belongs to the class I-like SAM-binding methyltransferase superfamily. Cation-independent O-methyltransferase family. COMT subfamily.

The protein operates within phytotoxin biosynthesis. Functionally, O-methyltransferase; part of the gene cluster that mediates the biosynthesis of the phytotoxin solanapyrone, a causal agent of early blight disease of potato and tomato. The prosolanapyrone synthase sol1 is a polyketide synthase that produces the octaketide desmethylprosolanapyrone I via sequential condensations of 7 malonyl-CoA units with one acetyl-CoA unit, and one methylation step. The octaketide backbone is further methylated by the sol2 O-methyltransferase to yield prosolanapyrone I. Prosolanapyrone I is hydroxylated to prosolanapyrone II by the cytochrome P450 monooxygenase sol6. The solanapyrone synthase sol5 then catalyzes the oxidation of prosolanapyrone II and the subsequent Diels Alder cycloisomerization of the product prosolanapyrone III to solanapyrones A and D. Solanapyrones A and D are then converted into solanapyrones B and E, respectively, by the sol3 dehydrogenase. This is O-methyltransferase sol2 (sol2) from Alternaria solani.